Here is a 306-residue protein sequence, read N- to C-terminus: Putative HPr kinase/phosphorylase 2 (306 aa).

Catalysis depends on residues H138 and K159. An ATP-binding site is contributed by 153–160 (GESGVGKS). S160 is a Mg(2+) binding site. The active-site Proton acceptor; for phosphorylation activity. Proton donor; for dephosphorylation activity is D177. The interval 201–210 (LALRSVGLLN) is important for the catalytic mechanism of both phosphorylation and dephosphorylation. Positions 264 to 269 (QLQPGR) are important for the catalytic mechanism of dephosphorylation.

It belongs to the HPrK/P family. As to quaternary structure, homohexamer. Mg(2+) serves as cofactor.

The enzyme catalyses [HPr protein]-L-serine + ATP = [HPr protein]-O-phospho-L-serine + ADP + H(+). It carries out the reaction [HPr protein]-O-phospho-L-serine + phosphate + H(+) = [HPr protein]-L-serine + diphosphate. In terms of biological role, catalyzes the ATP- as well as the pyrophosphate-dependent phosphorylation of a specific serine residue in HPr, a phosphocarrier protein of the phosphoenolpyruvate-dependent sugar phosphotransferase system (PTS). HprK/P also catalyzes the pyrophosphate-producing, inorganic phosphate-dependent dephosphorylation (phosphorolysis) of seryl-phosphorylated HPr (P-Ser-HPr). The two antagonistic activities of HprK/P are regulated by several intracellular metabolites, which change their concentration in response to the absence or presence of rapidly metabolisable carbon sources (glucose, fructose, etc.) in the growth medium. Also phosphorylates/dephosphorylates the HPr-like catabolite repression protein crh on a specific serine residue. Therefore, by controlling the phosphorylation state of HPr and crh, HPrK/P is a sensor enzyme that plays a major role in the regulation of carbon metabolism and sugar transport: it mediates carbon catabolite repression (CCR), and regulates PTS-catalyzed carbohydrate uptake and inducer exclusion. The sequence is that of Putative HPr kinase/phosphorylase 2 (hprK2) from Oceanobacillus iheyensis (strain DSM 14371 / CIP 107618 / JCM 11309 / KCTC 3954 / HTE831).